Reading from the N-terminus, the 141-residue chain is Putative antiporter subunit mnhB2 (141 aa).

Transmembrane regions (helical) follow at residues 10-30 (TVTK…FFAG), 35-55 (GGGF…FLAF), 70-90 (ILMI…TFFG), and 114-134 (ITLF…TVML).

Belongs to the CPA3 antiporters (TC 2.A.63) subunit B family. May form a heterooligomeric complex that consists of seven subunits: mnhA2, mnhB2, mnhC2, mnhD2, mnhE2, mnhF2 and mnhG2.

The protein resides in the cell membrane. The chain is Putative antiporter subunit mnhB2 (mnhB2) from Staphylococcus aureus (strain MRSA252).